Here is a 330-residue protein sequence, read N- to C-terminus: Ribose-phosphate pyrophosphokinase (330 aa).

ATP is bound at residue 55–57; sequence DGE. Residues histidine 148 and aspartate 187 each coordinate Mg(2+). Residue lysine 211 is part of the active site. D-ribose 5-phosphate contacts are provided by residues arginine 213, aspartate 237, and 241 to 245; that span reads DTGGT.

It belongs to the ribose-phosphate pyrophosphokinase family. Class I subfamily. In terms of assembly, homohexamer. The cofactor is Mg(2+).

It localises to the cytoplasm. The catalysed reaction is D-ribose 5-phosphate + ATP = 5-phospho-alpha-D-ribose 1-diphosphate + AMP + H(+). It participates in metabolic intermediate biosynthesis; 5-phospho-alpha-D-ribose 1-diphosphate biosynthesis; 5-phospho-alpha-D-ribose 1-diphosphate from D-ribose 5-phosphate (route I): step 1/1. Involved in the biosynthesis of the central metabolite phospho-alpha-D-ribosyl-1-pyrophosphate (PRPP) via the transfer of pyrophosphoryl group from ATP to 1-hydroxyl of ribose-5-phosphate (Rib-5-P). The protein is Ribose-phosphate pyrophosphokinase of Nostoc sp. (strain PCC 7120 / SAG 25.82 / UTEX 2576).